The sequence spans 201 residues: Pyridoxal 5'-phosphate synthase subunit PdxT (201 aa).

Residue 49–51 coordinates L-glutamine; it reads GES. C81 acts as the Nucleophile in catalysis. Residues R110 and 139 to 140 each bind L-glutamine; that span reads IR. Catalysis depends on charge relay system residues H180 and E182.

This sequence belongs to the glutaminase PdxT/SNO family. In terms of assembly, in the presence of PdxS, forms a dodecamer of heterodimers. Only shows activity in the heterodimer.

The enzyme catalyses aldehydo-D-ribose 5-phosphate + D-glyceraldehyde 3-phosphate + L-glutamine = pyridoxal 5'-phosphate + L-glutamate + phosphate + 3 H2O + H(+). It catalyses the reaction L-glutamine + H2O = L-glutamate + NH4(+). The protein operates within cofactor biosynthesis; pyridoxal 5'-phosphate biosynthesis. Catalyzes the hydrolysis of glutamine to glutamate and ammonia as part of the biosynthesis of pyridoxal 5'-phosphate. The resulting ammonia molecule is channeled to the active site of PdxS. In Salinispora arenicola (strain CNS-205), this protein is Pyridoxal 5'-phosphate synthase subunit PdxT.